Here is a 159-residue protein sequence, read N- to C-terminus: Protein UXT homolog (159 aa).

Belongs to the UXT family.

The chain is Protein UXT homolog from Nematostella vectensis (Starlet sea anemone).